The primary structure comprises 165 residues: HTH-type transcriptional regulator MmpR5 (165 aa).

The region spanning 1–151 is the HTH marR-type domain; sequence MSVNDGVDQM…LLAYMENVVS (151 aa). The segment at residues 53–76 is a DNA-binding region (H-T-H motif); the sequence is SEELATALAASSGGISTNARMLIQ.

Homodimer.

Functionally, controls the expression level of the Mmps2-MmpL2, MmpS4-MmpL4, and MmpS5-MmpL5 transport systems. Also controls its own expression. Acts by binding directly to the promoter regions. This chain is HTH-type transcriptional regulator MmpR5, found in Mycobacterium tuberculosis (strain ATCC 25618 / H37Rv).